We begin with the raw amino-acid sequence, 183 residues long: Ribosome rescue factor SmrB (183 aa).

A Smr domain is found at 98-173; sequence LDLHGLTQLQ…GDAALLVLIE (76 aa).

It belongs to the SmrB family. Associates with collided ribosomes, but not with correctly translating polysomes.

Acts as a ribosome collision sensor. Detects stalled/collided disomes (pairs of ribosomes where the leading ribosome is stalled and a second ribosome has collided with it) and endonucleolytically cleaves mRNA at the 5' boundary of the stalled ribosome. Stalled/collided disomes form a new interface (primarily via the 30S subunits) that binds SmrB. Cleaved mRNA becomes available for tmRNA ligation, leading to ribosomal subunit dissociation and rescue of stalled ribosomes. The chain is Ribosome rescue factor SmrB from Escherichia fergusonii (strain ATCC 35469 / DSM 13698 / CCUG 18766 / IAM 14443 / JCM 21226 / LMG 7866 / NBRC 102419 / NCTC 12128 / CDC 0568-73).